The chain runs to 90 residues: uncharacterized protein (90 aa).

An N-terminal signal peptide occupies residues 1-21 (MFKFSIPLLLFIFLFFSCINS). Residues 56-90 (SNEKLPERILSGSSGSCSSCSISSSNGSSSRSSKQ) are disordered. Low complexity predominate over residues 66-90 (SGSSGSCSSCSISSSNGSSSRSSKQ). N81 carries an N-linked (GlcNAc...) asparagine glycan.

This is an uncharacterized protein from Dictyostelium discoideum (Social amoeba).